The primary structure comprises 128 residues: Small ribosomal subunit protein uS9 (128 aa).

This sequence belongs to the universal ribosomal protein uS9 family. As to quaternary structure, part of the 30S ribosomal subunit. Contacts proteins S7 and S10.

In terms of biological role, part of the top of the head of the 30S subunit. The C-terminal region penetrates the head emerging in the P-site where it contacts tRNA. The chain is Small ribosomal subunit protein uS9 (rpsI) from Thermus thermophilus (strain ATCC BAA-163 / DSM 7039 / HB27).